Reading from the N-terminus, the 155-residue chain is Small ribosomal subunit protein bS16 (155 aa).

The tract at residues 113 to 155 (ADGAPTGEAIQQKKKKAPKKAEAAEAEAPAEEPAAESADAASE) is disordered. Acidic residues predominate over residues 136 to 146 (AEAEAPAEEPA).

It belongs to the bacterial ribosomal protein bS16 family.

The sequence is that of Small ribosomal subunit protein bS16 from Mycobacteroides abscessus (strain ATCC 19977 / DSM 44196 / CCUG 20993 / CIP 104536 / JCM 13569 / NCTC 13031 / TMC 1543 / L948) (Mycobacterium abscessus).